Consider the following 473-residue polypeptide: UDP-N-acetylmuramate--L-alanine ligase (473 aa).

Gly-123–Ser-129 provides a ligand contact to ATP.

This sequence belongs to the MurCDEF family.

Its subcellular location is the cytoplasm. It catalyses the reaction UDP-N-acetyl-alpha-D-muramate + L-alanine + ATP = UDP-N-acetyl-alpha-D-muramoyl-L-alanine + ADP + phosphate + H(+). It functions in the pathway cell wall biogenesis; peptidoglycan biosynthesis. Cell wall formation. This Prochlorococcus marinus subsp. pastoris (strain CCMP1986 / NIES-2087 / MED4) protein is UDP-N-acetylmuramate--L-alanine ligase.